The primary structure comprises 363 residues: NADH-quinone oxidoreductase subunit H (363 aa).

10 consecutive transmembrane segments (helical) span residues 29–49 (VLKI…YVVW), 62–82 (GPMY…KLLF), 96–116 (FIIA…VVPF), 127–147 (VGLL…ILAG), 163–183 (AAQV…VMIA), 202–222 (FFDW…VSGV), 238–257 (EIVA…LFFL), 278–298 (WLSP…DWLW), 299–319 (KGGW…YIWF), and 339–359 (FIPL…YGVI).

It belongs to the complex I subunit 1 family. In terms of assembly, NDH-1 is composed of 14 different subunits. Subunits NuoA, H, J, K, L, M, N constitute the membrane sector of the complex.

The protein resides in the cell inner membrane. The catalysed reaction is a quinone + NADH + 5 H(+)(in) = a quinol + NAD(+) + 4 H(+)(out). Functionally, NDH-1 shuttles electrons from NADH, via FMN and iron-sulfur (Fe-S) centers, to quinones in the respiratory chain. The immediate electron acceptor for the enzyme in this species is believed to be ubiquinone. Couples the redox reaction to proton translocation (for every two electrons transferred, four hydrogen ions are translocated across the cytoplasmic membrane), and thus conserves the redox energy in a proton gradient. This subunit may bind ubiquinone. This chain is NADH-quinone oxidoreductase subunit H, found in Xanthomonas oryzae pv. oryzae (strain MAFF 311018).